A 138-amino-acid chain; its full sequence is Endoribonuclease YbeY (138 aa).

3 residues coordinate Zn(2+): histidine 106, histidine 110, and aspartate 116.

This sequence belongs to the endoribonuclease YbeY family. The cofactor is Zn(2+).

It is found in the cytoplasm. In terms of biological role, single strand-specific metallo-endoribonuclease involved in late-stage 70S ribosome quality control and in maturation of the 3' terminus of the 16S rRNA. The chain is Endoribonuclease YbeY from Phocaeicola vulgatus (strain ATCC 8482 / DSM 1447 / JCM 5826 / CCUG 4940 / NBRC 14291 / NCTC 11154) (Bacteroides vulgatus).